The primary structure comprises 145 residues: Deoxyuridine 5'-triphosphate nucleotidohydrolase (145 aa).

Substrate is bound by residues 63–65 (RSG), glutamine 76, and 80–82 (TVD).

This sequence belongs to the dUTPase family. The cofactor is Mg(2+).

The enzyme catalyses dUTP + H2O = dUMP + diphosphate + H(+). It functions in the pathway pyrimidine metabolism; dUMP biosynthesis; dUMP from dCTP (dUTP route): step 2/2. This enzyme is involved in nucleotide metabolism: it produces dUMP, the immediate precursor of thymidine nucleotides and it decreases the intracellular concentration of dUTP so that uracil cannot be incorporated into DNA. The sequence is that of Deoxyuridine 5'-triphosphate nucleotidohydrolase from Chlamydia trachomatis serovar L2 (strain ATCC VR-902B / DSM 19102 / 434/Bu).